A 306-amino-acid chain; its full sequence is Recombination-associated protein RdgC (306 aa).

It belongs to the RdgC family.

It localises to the cytoplasm. The protein localises to the nucleoid. In terms of biological role, may be involved in recombination. The polypeptide is Recombination-associated protein RdgC (Pseudomonas fluorescens (strain Pf0-1)).